The sequence spans 348 residues: tRNA N6-adenosine threonylcarbamoyltransferase (348 aa).

Fe cation is bound by residues His120 and His124. Residues 143-147 (LVSGG), Asp176, Gly189, and Asn282 each bind substrate. A Fe cation-binding site is contributed by Asp310.

Belongs to the KAE1 / TsaD family. It depends on Fe(2+) as a cofactor.

It is found in the cytoplasm. It carries out the reaction L-threonylcarbamoyladenylate + adenosine(37) in tRNA = N(6)-L-threonylcarbamoyladenosine(37) in tRNA + AMP + H(+). Functionally, required for the formation of a threonylcarbamoyl group on adenosine at position 37 (t(6)A37) in tRNAs that read codons beginning with adenine. Is involved in the transfer of the threonylcarbamoyl moiety of threonylcarbamoyl-AMP (TC-AMP) to the N6 group of A37, together with TsaE and TsaB. TsaD likely plays a direct catalytic role in this reaction. In Paracidovorax citrulli (strain AAC00-1) (Acidovorax citrulli), this protein is tRNA N6-adenosine threonylcarbamoyltransferase.